A 223-amino-acid chain; its full sequence is MKIFLDTANIDEIRTGVNWGIVDGVTTNPTLISKEAVNGKKYGDIIREILKIVDGPVSVEVVSTKYEGMVEEARKIHGLGDNAVVKIPMTEDGLRAIKTLSSEHINTNCTLVFNPIQALLAAKAGATYVSPFVGRLDDIGEDGMQIIDMIRTIFNNYIIKTQILVASIRNPIHVLRSAVIGADVVTVPFNVLKSLMKHPKTDEGLAKFLEDWKKVSPDGKLIL.

K86 functions as the Schiff-base intermediate with substrate in the catalytic mechanism.

Belongs to the transaldolase family. Type 3B subfamily.

It is found in the cytoplasm. The catalysed reaction is D-sedoheptulose 7-phosphate + D-glyceraldehyde 3-phosphate = D-erythrose 4-phosphate + beta-D-fructose 6-phosphate. It participates in carbohydrate degradation; pentose phosphate pathway; D-glyceraldehyde 3-phosphate and beta-D-fructose 6-phosphate from D-ribose 5-phosphate and D-xylulose 5-phosphate (non-oxidative stage): step 2/3. In terms of biological role, transaldolase is important for the balance of metabolites in the pentose-phosphate pathway. This is Probable transaldolase (tal) from Thermoplasma acidophilum (strain ATCC 25905 / DSM 1728 / JCM 9062 / NBRC 15155 / AMRC-C165).